Here is a 295-residue protein sequence, read N- to C-terminus: MPTRANKVETAWSALLAGASETRQEHLAPSPLFILRQTLFCVLAAYLFCGAGMVWNDWIDRDIDANVARTKNRPLASGKVTTAQAFVWMALQVIASCAVLHVMLDGKDVHVIPVMIASMLYPFLKRPTAKKLHIYPQYMLAFTIAWPAIPGRAAICGRDESFGETVRYCLPLCTVVFFWTIYLNTAYSYQDVVDDRKLNVNSFYNIAGRHTHLVLVALVCPILACLPLYLTQFQSTWLWVTWMGVWTAAFAVQLALFDAKQPASGGSLHKSNFVLGIWTIVVCSVELLLKARVSI.

The next 8 helical transmembrane spans lie at 39–59, 84–104, 109–124, 131–151, 168–188, 213–233, 237–257, and 271–291; these read LFCV…NDWI, QAFV…HVML, VHVI…YPFL, KLHI…AIPG, YCLP…TAYS, LVLV…LTQF, WLWV…LALF, and SNFV…LLKA.

This sequence belongs to the UbiA prenyltransferase family. Requires Mg(2+) as cofactor.

The protein localises to the membrane. It functions in the pathway secondary metabolite biosynthesis; terpenoid biosynthesis. Its function is as follows. Polyprenyl transferase; part of the gene cluster that mediates the biosynthesis of the diterpenoid pyrones subglutinols A and B. The first step of the pathway is the synthesis of the alpha-pyrone moiety by the polyketide synthase dpmaA via condensation of one acetyl-CoA starter unit with 3 malonyl-CoA units and 2 methylations. The alpha-pyrone is then combined with geranylgeranyl pyrophosphate (GGPP) formed by the GGPP synthase dpmaD through the action of the prenyltransferase dpmaC to yield a linear alpha-pyrone diterpenoid. Subsequent steps in the diterpenoid pyrone biosynthetic pathway involve the decalin core formation, which is initiated by the epoxidation of the C10-C11 olefin by the FAD-dependent oxidoreductase dpmaE, and is followed by a cyclization cascade catalyzed by the terpene cyclase dpmaB. The dehydrogenase dpmaF is then involved in tetrahydrofuran (THF) ring formation at the C5 unit to complete the formation of subglutinols A and B. This Metarhizium anisopliae (Entomophthora anisopliae) protein is Polyprenyl transferase dpmaC.